Reading from the N-terminus, the 423-residue chain is Alpha-1-antichymotrypsin (423 aa).

The first 23 residues, 1 to 23 (MERMLPFLALGLLVAGFCPAVLC), serve as a signal peptide directing secretion. 5 N-linked (GlcNAc...) asparagine glycosylation sites follow: asparagine 93, asparagine 106, asparagine 127, asparagine 186, and asparagine 271. An RCL region spans residues 369–394 (GTEASAATAVKITLLSALVDPMTIVR).

The protein belongs to the serpin family. Interacts with DNAJC1. Plasma.

The protein localises to the secreted. In terms of biological role, although its physiological function is unclear, it can inhibit neutrophil cathepsin G and mast cell chymase, both of which can convert angiotensin-1 to the active angiotensin-2. The sequence is that of Alpha-1-antichymotrypsin (SERPINA3) from Pongo abelii (Sumatran orangutan).